The chain runs to 166 residues: Large ribosomal subunit protein uL11 (166 aa).

The protein belongs to the universal ribosomal protein uL11 family.

This protein binds directly to 26S ribosomal RNA. The chain is Large ribosomal subunit protein uL11 (RPL12) from Prunus armeniaca (Apricot).